Consider the following 573-residue polypeptide: 60 kDa heat shock protein, mitochondrial (573 aa).

The transit peptide at 1–26 (MLRLPTVFRQMRPVSRVLAPHLTRAY) directs the protein to the mitochondrion. Lys31 carries the post-translational modification N6-succinyllysine. Ser67 and Ser70 each carry phosphoserine. Lys75 is an ATP binding site. The residue at position 75 (Lys75) is an N6-acetyllysine. Lys82 bears the N6-acetyllysine; alternate mark. Position 82 is an N6-succinyllysine; alternate (Lys82). Residue Lys87 is modified to N6-acetyllysine. Tyr90 carries the phosphotyrosine modification. The residue at position 91 (Lys91) is an N6-acetyllysine. 111 to 115 (DGTTT) lines the ATP pocket. At Lys125 the chain carries N6-acetyllysine; alternate. Position 125 is an N6-succinyllysine; alternate (Lys125). N6-acetyllysine is present on Lys130. Lys133 is modified (N6-acetyllysine; alternate). Lys133 carries the N6-succinyllysine; alternate modification. An N6-malonyllysine; alternate modification is found at Lys133. Lys156 bears the N6-acetyllysine mark. Lys191, Lys202, Lys205, Lys218, and Lys236 each carry N6-acetyllysine; alternate. 5 positions are modified to N6-succinyllysine; alternate: Lys191, Lys202, Lys205, Lys218, and Lys236. At Lys249 the chain carries N6-acetyllysine. At Lys250 the chain carries N6-acetyllysine; alternate. Lys250 is modified (N6-succinyllysine; alternate). 2 positions are modified to N6-acetyllysine: Lys269 and Lys292. Lys301 is modified (N6-succinyllysine). Lys314 bears the N6-acetyllysine mark. Lys352 is subject to N6-acetyllysine; alternate. Residue Lys352 is modified to N6-succinyllysine; alternate. An N6-acetyllysine modification is found at Lys389. Lys396 is subject to N6-acetyllysine; alternate. An N6-succinyllysine; alternate modification is found at Lys396. At Ser410 the chain carries Phosphoserine. ATP is bound at residue Gly440. Lys469 carries the N6-acetyllysine modification. Position 481 is an N6-acetyllysine; alternate (Lys481). Lys481 carries the N6-succinyllysine; alternate modification. The residue at position 488 (Ser488) is a Phosphoserine. Asp520 contributes to the ATP binding site. Residue Lys551 forms a Glycyl lysine isopeptide (Lys-Gly) (interchain with G-Cter in SUMO2) linkage.

Belongs to the chaperonin (HSP60) family. As to quaternary structure, homoheptamer arranged in a ring structure. The functional units of these chaperonins consist of heptameric rings of the large subunit Hsp60, which function as a back-to-back double ring. Interacts with 2 heptameric Hsp10 rings to form the symmetrical football complex. Interacts with HRAS. Interacts with ATAD3A. Interacts with ETFBKMT and EEF1AKMT3. Interacts with MFHAS1.

It localises to the mitochondrion matrix. The enzyme catalyses ATP + H2O + a folded polypeptide = ADP + phosphate + an unfolded polypeptide.. In terms of biological role, chaperonin implicated in mitochondrial protein import and macromolecular assembly. Together with Hsp10, facilitates the correct folding of imported proteins. May also prevent misfolding and promote the refolding and proper assembly of unfolded polypeptides generated under stress conditions in the mitochondrial matrix. The functional units of these chaperonins consist of heptameric rings of the large subunit Hsp60, which function as a back-to-back double ring. In a cyclic reaction, Hsp60 ring complexes bind one unfolded substrate protein per ring, followed by the binding of ATP and association with 2 heptameric rings of the co-chaperonin Hsp10. This leads to sequestration of the substrate protein in the inner cavity of Hsp60 where, for a certain period of time, it can fold undisturbed by other cell components. Synchronous hydrolysis of ATP in all Hsp60 subunits results in the dissociation of the chaperonin rings and the release of ADP and the folded substrate protein. The polypeptide is 60 kDa heat shock protein, mitochondrial (HSPD1) (Pongo abelii (Sumatran orangutan)).